A 404-amino-acid chain; its full sequence is F-box protein At2g17036 (404 aa).

Positions 2–50 (MDWATLPKDLLDLISKCLESSFDLIQFRSVCSSWRSAAGPKRLLWAHNL) constitute an F-box domain.

The protein is F-box protein At2g17036 of Arabidopsis thaliana (Mouse-ear cress).